The sequence spans 83 residues: Exodeoxyribonuclease 7 small subunit (83 aa).

The interval 63–83 (VQNDDGTTGTEPLADTGESGR) is disordered.

Belongs to the XseB family. In terms of assembly, heterooligomer composed of large and small subunits.

It localises to the cytoplasm. The catalysed reaction is Exonucleolytic cleavage in either 5'- to 3'- or 3'- to 5'-direction to yield nucleoside 5'-phosphates.. Functionally, bidirectionally degrades single-stranded DNA into large acid-insoluble oligonucleotides, which are then degraded further into small acid-soluble oligonucleotides. This is Exodeoxyribonuclease 7 small subunit from Gluconobacter oxydans (strain 621H) (Gluconobacter suboxydans).